The chain runs to 179 residues: Large ribosomal subunit protein uL5 (179 aa).

Belongs to the universal ribosomal protein uL5 family. In terms of assembly, part of the 50S ribosomal subunit; part of the 5S rRNA/L5/L18/L25 subcomplex. Contacts the 5S rRNA and the P site tRNA. Forms a bridge to the 30S subunit in the 70S ribosome.

Functionally, this is one of the proteins that bind and probably mediate the attachment of the 5S RNA into the large ribosomal subunit, where it forms part of the central protuberance. In the 70S ribosome it contacts protein S13 of the 30S subunit (bridge B1b), connecting the 2 subunits; this bridge is implicated in subunit movement. Contacts the P site tRNA; the 5S rRNA and some of its associated proteins might help stabilize positioning of ribosome-bound tRNAs. The polypeptide is Large ribosomal subunit protein uL5 (Photorhabdus laumondii subsp. laumondii (strain DSM 15139 / CIP 105565 / TT01) (Photorhabdus luminescens subsp. laumondii)).